Consider the following 328-residue polypeptide: Ferredoxin--NADP reductase 2 (328 aa).

FAD contacts are provided by Thr-16, Glu-35, Gln-43, Tyr-48, Ile-88, Phe-123, Asp-284, and Thr-325.

Belongs to the ferredoxin--NADP reductase type 2 family. In terms of assembly, homodimer. FAD serves as cofactor.

The catalysed reaction is 2 reduced [2Fe-2S]-[ferredoxin] + NADP(+) + H(+) = 2 oxidized [2Fe-2S]-[ferredoxin] + NADPH. This Oceanobacillus iheyensis (strain DSM 14371 / CIP 107618 / JCM 11309 / KCTC 3954 / HTE831) protein is Ferredoxin--NADP reductase 2.